A 376-amino-acid chain; its full sequence is Queuine tRNA-ribosyltransferase accessory subunit 2 (376 aa).

4 residues coordinate Zn(2+): C323, C325, C328, and H354.

The protein belongs to the queuine tRNA-ribosyltransferase family. QTRT2 subfamily. As to quaternary structure, heterodimer of a catalytic subunit and an accessory subunit. The cofactor is Zn(2+).

It is found in the cytoplasm. Functionally, non-catalytic subunit of the queuine tRNA-ribosyltransferase (TGT) that catalyzes the base-exchange of a guanine (G) residue with queuine (Q) at position 34 (anticodon wobble position) in tRNAs with GU(N) anticodons (tRNA-Asp, -Asn, -His and -Tyr), resulting in the hypermodified nucleoside queuosine (7-(((4,5-cis-dihydroxy-2-cyclopenten-1-yl)amino)methyl)-7-deazaguanosine). The sequence is that of Queuine tRNA-ribosyltransferase accessory subunit 2 from Caenorhabditis briggsae.